The primary structure comprises 272 residues: tRNA pseudouridine synthase A (272 aa).

The active-site Nucleophile is the Asp-62. Tyr-120 serves as a coordination point for substrate.

This sequence belongs to the tRNA pseudouridine synthase TruA family. Homodimer.

It catalyses the reaction uridine(38/39/40) in tRNA = pseudouridine(38/39/40) in tRNA. In terms of biological role, formation of pseudouridine at positions 38, 39 and 40 in the anticodon stem and loop of transfer RNAs. In Nitrosomonas europaea (strain ATCC 19718 / CIP 103999 / KCTC 2705 / NBRC 14298), this protein is tRNA pseudouridine synthase A.